A 250-amino-acid polypeptide reads, in one-letter code: MTEKTASHYWNEETSILKLRRKDILLFEIYATTLLLGSIYSIYVDKWSITSYFGNSKNLINLIFVKRGWFWTSLVYFYHAWDQKRNKIDFKFISRYIVATLWWMFVTQWFIGPGLIDRTFALSGGSCKNFDGDSSVFIPLTASTCKGLNGSWSGGHDLSGHVFLLTHSSLFMLSENFSFILNNGIKATSTKVLFGLLGLWWWMLFVTASFYHTTFEKCTGFFSGILEWSIVYVFSSRMPAVADLLGSSDY.

The Cytoplasmic portion of the chain corresponds to 1 to 23; sequence MTEKTASHYWNEETSILKLRRKD. Residues 24 to 44 traverse the membrane as a helical segment; that stretch reads ILLFEIYATTLLLGSIYSIYV. Residues 45–58 are Lumenal-facing; sequence DKWSITSYFGNSKN. A helical transmembrane segment spans residues 59–79; the sequence is LINLIFVKRGWFWTSLVYFYH. Over 80–95 the chain is Cytoplasmic; it reads AWDQKRNKIDFKFISR. The chain crosses the membrane as a helical span at residues 96–116; sequence YIVATLWWMFVTQWFIGPGLI. The Lumenal segment spans residues 117 to 160; sequence DRTFALSGGSCKNFDGDSSVFIPLTASTCKGLNGSWSGGHDLSG. N-linked (GlcNAc...) asparagine glycosylation is present at Asn149. The active site involves His161. The chain crosses the membrane as a helical span at residues 161–181; the sequence is HVFLLTHSSLFMLSENFSFIL. Residues 182–191 lie on the Cytoplasmic side of the membrane; it reads NNGIKATSTK. The helical transmembrane segment at 192 to 212 threads the bilayer; it reads VLFGLLGLWWWMLFVTASFYH. His212 is an active-site residue. A topological domain (lumenal) is located at residue Thr213. Residues 214–234 form a helical membrane-spanning segment; it reads TFEKCTGFFSGILEWSIVYVF. The Cytoplasmic portion of the chain corresponds to 235–250; that stretch reads SSRMPAVADLLGSSDY.

It belongs to the FIT family. Fungal FIT2B/SCS3 subfamily.

Its subcellular location is the endoplasmic reticulum membrane. It carries out the reaction an acyl-CoA + H2O = an acyl-4'-phosphopantetheine + adenosine 3',5'-bisphosphate + 2 H(+). The enzyme catalyses (9Z)-octadecenoyl-CoA + H2O = S-(9Z-octadecenoyl)-4'-phosphopantetheine + adenosine 3',5'-bisphosphate + 2 H(+). It catalyses the reaction (5Z,8Z,11Z,14Z)-eicosatetraenoyl-CoA + H2O = S-(5Z,8Z,11Z,14Z-eicosatetraenoyl)-4'-phosphopantetheine + adenosine 3',5'-bisphosphate + 2 H(+). The catalysed reaction is hexadecanoyl-CoA + H2O = S-hexadecanoyl-4'-phosphopantetheine + adenosine 3',5'-bisphosphate + 2 H(+). Functionally, fatty acyl-coenzyme A (CoA) diphosphatase that hydrolyzes fatty acyl-CoA to yield acyl-4'-phosphopantetheine and adenosine 3',5'-bisphosphate. Preferentially hydrolyzes unsaturated long-chain acyl-CoA substrates in the endoplasmic reticulum (ER) lumen. This catalytic activity is required for maintaining ER structure and for lipid droplets (LDs) biogenesis, which are lipid storage organelles involved in maintaining lipid and energy homeostasis. May directly bind to diacylglycerol (DAGs) and triacylglycerol, which is also important for LD biogenesis. May support directional budding of nacent LDs from the ER into the cytosol by reducing DAG levels at sites of LD formation. May play a role in the regulation of cell morphology and cytoskeletal organization. The protein is Acyl-coenzyme A diphosphatase fit1 of Schizosaccharomyces pombe (strain 972 / ATCC 24843) (Fission yeast).